The primary structure comprises 743 residues: tRNA(Met) cytidine acetyltransferase TmcA (743 aa).

ATP is bound by residues glutamine 216, 241 to 250, and arginine 390; that span reads GRGKSASIGL. An N-acetyltransferase domain is found at 420-604; it reads LKIEDVSQEE…YSVIVIRALS (185 aa). Residues 531–533 and 538–544 contribute to the acetyl-CoA site; these read IAV and QGKGIGS.

It belongs to the RNA cytidine acetyltransferase family. TmcA subfamily.

The protein resides in the cytoplasm. It catalyses the reaction cytidine(34) in elongator tRNA(Met) + acetyl-CoA + ATP + H2O = N(4)-acetylcytidine(34) in elongator tRNA(Met) + ADP + phosphate + CoA + H(+). Catalyzes the formation of N(4)-acetylcytidine (ac(4)C) at the wobble position of tRNA(Met), by using acetyl-CoA as an acetyl donor and ATP (or GTP). In Saccharolobus islandicus (strain Y.G.57.14 / Yellowstone #1) (Sulfolobus islandicus), this protein is tRNA(Met) cytidine acetyltransferase TmcA.